The sequence spans 439 residues: Exodeoxyribonuclease 7 large subunit (439 aa).

The protein belongs to the XseA family. As to quaternary structure, heterooligomer composed of large and small subunits.

Its subcellular location is the cytoplasm. It carries out the reaction Exonucleolytic cleavage in either 5'- to 3'- or 3'- to 5'-direction to yield nucleoside 5'-phosphates.. Its function is as follows. Bidirectionally degrades single-stranded DNA into large acid-insoluble oligonucleotides, which are then degraded further into small acid-soluble oligonucleotides. This Haemophilus influenzae (strain 86-028NP) protein is Exodeoxyribonuclease 7 large subunit.